The primary structure comprises 447 residues: Protein king tubby (447 aa).

Residues Gly-54–Ser-84 form a disordered region. A compositionally biased stretch (low complexity) spans Ile-62–Ser-84. Ser-136 carries the post-translational modification Phosphoserine. Residues Glu-168 to Ser-182 show a composition bias toward low complexity. Residues Glu-168 to Ser-191 form a disordered region.

The protein belongs to the TUB family.

The protein localises to the cytoplasm. The protein resides in the nucleus. Its subcellular location is the cell projection. It localises to the cilium membrane. It is found in the rhabdomere. The chain is Protein king tubby from Drosophila grimshawi (Hawaiian fruit fly).